The sequence spans 365 residues: tRNA(Met) cytidine acetate ligase (365 aa).

Residues 7 to 20, G96, N152, and R175 contribute to the ATP site; that span reads IAEF…HKYL.

It belongs to the TmcAL family.

Its subcellular location is the cytoplasm. The enzyme catalyses cytidine(34) in elongator tRNA(Met) + acetate + ATP = N(4)-acetylcytidine(34) in elongator tRNA(Met) + AMP + diphosphate. Catalyzes the formation of N(4)-acetylcytidine (ac(4)C) at the wobble position of elongator tRNA(Met), using acetate and ATP as substrates. First activates an acetate ion to form acetyladenylate (Ac-AMP) and then transfers the acetyl group to tRNA to form ac(4)C34. The protein is tRNA(Met) cytidine acetate ligase of Streptococcus pneumoniae serotype 19F (strain G54).